A 154-amino-acid chain; its full sequence is Small ribosomal subunit protein bS16 (154 aa).

The tract at residues 82–154 is disordered; that stretch reads VQERAARSNP…EAAAEESTEA (73 aa). A compositionally biased stretch (basic and acidic residues) spans 92–109; the sequence is KKAEPGEKAKERAEERAA. A compositionally biased stretch (low complexity) spans 110–129; the sequence is KLAAAEEAANAPAEEPAAEP. The segment covering 142–154 has biased composition (acidic residues); that stretch reads PAEEAAAEESTEA.

The protein belongs to the bacterial ribosomal protein bS16 family.

The protein is Small ribosomal subunit protein bS16 of Rhizorhabdus wittichii (strain DSM 6014 / CCUG 31198 / JCM 15750 / NBRC 105917 / EY 4224 / RW1) (Sphingomonas wittichii).